A 148-amino-acid chain; its full sequence is Large ribosomal subunit protein bL9 (148 aa).

Belongs to the bacterial ribosomal protein bL9 family.

In terms of biological role, binds to the 23S rRNA. The polypeptide is Large ribosomal subunit protein bL9 (Macrococcus caseolyticus (strain JCSC5402) (Macrococcoides caseolyticum)).